A 165-amino-acid chain; its full sequence is LIM domain transcription factor LMO4.2 (165 aa).

LIM zinc-binding domains follow at residues 21-83 and 85-147; these read KRCA…LFGN and GACS…ALIN.

Acts as a positive cofactor of GATA transcription factors to establish the identity of the ventral mesoderm during gastrulation. Down-regulation in the dorsal mesoderm is necessary for the proper formation of this territory since, when present, lmo4 may bind ldb1 and restrict the availability of this cofactor for Spemman organizer transcription factors. At neurula stages, suppresses primary neuron differentiation and modulates gene expression at the Isthmic Organizer of the midbrain-hindbrain boundary. The chain is LIM domain transcription factor LMO4.2 (lmo4.2) from Xenopus tropicalis (Western clawed frog).